Reading from the N-terminus, the 170-residue chain is Peptide deformylase (170 aa).

Fe cation-binding residues include Cys-91 and His-133. Glu-134 is an active-site residue. His-137 contacts Fe cation.

It belongs to the polypeptide deformylase family. The cofactor is Fe(2+).

It catalyses the reaction N-terminal N-formyl-L-methionyl-[peptide] + H2O = N-terminal L-methionyl-[peptide] + formate. Its function is as follows. Removes the formyl group from the N-terminal Met of newly synthesized proteins. Requires at least a dipeptide for an efficient rate of reaction. N-terminal L-methionine is a prerequisite for activity but the enzyme has broad specificity at other positions. This chain is Peptide deformylase, found in Yersinia pseudotuberculosis serotype O:1b (strain IP 31758).